The following is a 179-amino-acid chain: Adenine phosphoribosyltransferase (179 aa).

The protein belongs to the purine/pyrimidine phosphoribosyltransferase family. In terms of assembly, homodimer.

The protein resides in the cytoplasm. It catalyses the reaction AMP + diphosphate = 5-phospho-alpha-D-ribose 1-diphosphate + adenine. It functions in the pathway purine metabolism; AMP biosynthesis via salvage pathway; AMP from adenine: step 1/1. Its function is as follows. Catalyzes a salvage reaction resulting in the formation of AMP, that is energically less costly than de novo synthesis. In Helicobacter pylori (strain ATCC 700392 / 26695) (Campylobacter pylori), this protein is Adenine phosphoribosyltransferase.